Here is a 298-residue protein sequence, read N- to C-terminus: MAKERALTLEALRVMDAIDRRGSFAAAADELGRVPSALSYTMQKLEEELDVVLFDRSGHRTKFTNVGRMLLERGRVLLEAADKLTTDAEALARGWETHLTIVTEALVPTPAFFPLIDKLAAKANTQLAIITEVLAGAWERLEQGRADIVIAPDMHFRSSSEINSRKLYTLMNVYVAAPDHPIHQEPEPLSEVTRVKYRGIAVADTARERPVLTVQLLDKQPRLTVSTIEDKRQALLAGLGVATMPYPMVEKDIAEGRLRVVSPESTSEIDIIMAWRRDSMGEAKSWCLREIPKLFNGK.

The region spanning 7–64 is the HTH lysR-type domain; sequence LTLEALRVMDAIDRRGSFAAAADELGRVPSALSYTMQKLEEELDVVLFDRSGHRTKFT. The segment at residues 24–43 is a DNA-binding region (H-T-H motif); sequence FAAAADELGRVPSALSYTMQ.

Belongs to the LysR transcriptional regulatory family.

In terms of biological role, positive regulator partially required for expression of genes in the locus of effacement (LEE) large pathogenicity island (PAI). Also partially responsible for expression of neighboring gene dlsT (yhaO) during late exponential growth. Binds to DNA of promoter 1 in LEE and DNA from the dlsT promoter region. This is HTH-type transcriptional regulator YhaJ (yhaJ) from Escherichia coli O157:H7.